The following is a 146-amino-acid chain: Hemoglobin subunit beta (146 aa).

The Globin domain occupies 2–146 (HWSAEEKQLI…VAHALARKYH (145 aa)). Residues histidine 63 and histidine 92 each coordinate heme b.

Belongs to the globin family. As to quaternary structure, heterotetramer of two alpha chains and two beta chains. In terms of tissue distribution, red blood cells.

In terms of biological role, involved in oxygen transport from the lung to the various peripheral tissues. This chain is Hemoglobin subunit beta (HBB), found in Streptopelia orientalis (Eastern turtle dove).